Reading from the N-terminus, the 421-residue chain is UDP-N-acetylglucosamine 1-carboxyvinyltransferase (421 aa).

22–23 (KN) serves as a coordination point for phosphoenolpyruvate. Arg92 is a binding site for UDP-N-acetyl-alpha-D-glucosamine. Cys116 functions as the Proton donor in the catalytic mechanism. 2-(S-cysteinyl)pyruvic acid O-phosphothioketal is present on Cys116. UDP-N-acetyl-alpha-D-glucosamine-binding positions include 121–125 (RPVDQ), Asp304, and Ile326.

This sequence belongs to the EPSP synthase family. MurA subfamily.

The protein resides in the cytoplasm. It catalyses the reaction phosphoenolpyruvate + UDP-N-acetyl-alpha-D-glucosamine = UDP-N-acetyl-3-O-(1-carboxyvinyl)-alpha-D-glucosamine + phosphate. It participates in cell wall biogenesis; peptidoglycan biosynthesis. In terms of biological role, cell wall formation. Adds enolpyruvyl to UDP-N-acetylglucosamine. The polypeptide is UDP-N-acetylglucosamine 1-carboxyvinyltransferase (Bordetella avium (strain 197N)).